The primary structure comprises 260 residues: Myb transcription factor 42 (260 aa).

HTH myb-type domains are found at residues 9–61 (KAHT…INYL) and 62–116 (RPDL…RRKL). 2 consecutive DNA-binding regions (H-T-H motif) follow at residues 37 to 61 (WRSL…INYL) and 89 to 112 (WSLI…NTHI).

As to expression, mainly expressed in the aerial parts and, to a lower extent, in roots.

It localises to the nucleus. Its function is as follows. Transcription factor that negatively regulates the expression of caffeic acid O-methyl-transferase genes (COMTs) and of other genes involved in the biosynthesis of lignin, thus preventing lignification. The protein is Myb transcription factor 42 of Zea mays (Maize).